A 1018-amino-acid polypeptide reads, in one-letter code: Thrombospondin type-1 domain-containing protein 4 (1018 aa).

The first 25 residues, 1–25 (MVSHFMGSLSVLCFLLLLGFQFVCP), serve as a signal peptide directing secretion. Positions 53–307 (PGVWGAWGPW…YKLCNTNVCP (255 aa)) constitute a TSP type-1 1 domain. Disordered regions lie at residues 111-235 (SVPL…RSGL), 254-279 (PAAS…ATQS), and 534-623 (SPQV…NWKQ). Positions 187-200 (QRLRRQKLSSRHSR) are enriched in basic residues. The segment covering 201-210 (SQGASSARHG) has biased composition (low complexity). A compositionally biased stretch (polar residues) spans 259–279 (LFHSPETSNNHGVGTHGATQS). Composition is skewed to basic and acidic residues over residues 556–577 (RSQE…RGEA) and 592–603 (RHPDRFSPHRPD). 5 TSP type-1 domains span residues 676–737 (CPAF…KICS), 739–792 (WQIR…DMGP), 793–851 (CAKS…GPCT), 852–911 (GKVE…HLKP), and 912–968 (CGAK…QDCV). Residues 971–1008 (VDENCKDKYYNCNVVVQARLCVYNYYKTACCASCTRVA) form the PLAC domain.

Interacts with FBN1. May interact with TGFB1.

Its subcellular location is the secreted. It localises to the extracellular space. The protein localises to the extracellular matrix. Its function is as follows. Promotes FBN1 matrix assembly. Attenuates TGFB signaling, possibly by accelerating the sequestration of large latent complexes of TGFB or active TGFB by FBN1 microfibril assembly, thereby negatively regulating the expression of TGFB regulatory targets, such as POSTN. The sequence is that of Thrombospondin type-1 domain-containing protein 4 (THSD4) from Homo sapiens (Human).